A 2475-amino-acid chain; its full sequence is Polyprotein pp220 (2475 aa).

Gly2 carries the N-myristoyl glycine; by host lipid modification. Positions 2184 to 2211 (RNQIIGELNAFRTQLEDTRREVNNLIQT) form a coiled coil.

Belongs to the asfivirus polyprotein pp220 family. In terms of processing, specific enzymatic cleavages in vivo by the viral pS273R protease yield mature proteins.

It localises to the host cytoplasm. The protein localises to the host perinuclear region. Its subcellular location is the virion. It is found in the host nucleus. In terms of biological role, essential for the core assembly. Its myristoyl moiety may function as a membrane-anchoring signal to bind the developing core shell to the inner viral envelope. The structural protein p34 is a component of the virus core shell. Its function is as follows. The structural protein p14 is a component of the virus core shell. Functionally, the structural protein p37 is a component of the virus core shell. In terms of biological role, the structural protein p150 is a component of the virus core shell. This African swine fever virus (isolate Tick/South Africa/Pretoriuskop Pr4/1996) (ASFV) protein is Polyprotein pp220.